Consider the following 149-residue polypeptide: Large ribosomal subunit protein bL9 (149 aa).

This sequence belongs to the bacterial ribosomal protein bL9 family.

Binds to the 23S rRNA. The chain is Large ribosomal subunit protein bL9 from Bacillus velezensis (strain DSM 23117 / BGSC 10A6 / LMG 26770 / FZB42) (Bacillus amyloliquefaciens subsp. plantarum).